Reading from the N-terminus, the 182-residue chain is Small heat shock protein hspG1 (182 aa).

The region spanning 43 to 182 (IKRIDIIPSM…SNSSFKININ (140 aa)) is the sHSP domain.

This sequence belongs to the small heat shock protein (HSP20) family.

In Dictyostelium discoideum (Social amoeba), this protein is Small heat shock protein hspG1 (hspG1).